An 854-amino-acid chain; its full sequence is Protein mono-ADP-ribosyltransferase PARP8 (854 aa).

Disordered stretches follow at residues 113-138 (NGEE…EFYY) and 291-310 (SYPP…EQDG). Acidic residues predominate over residues 123 to 135 (VEEDSEGDNDSEE). ADP-ribosylcysteine occurs at positions 332, 367, 376, and 395. Residues 617 to 844 (EMTQAPYLEI…QEGGIHKEIL (228 aa)) form the PARP catalytic domain. The segment at 750 to 777 (QKVSAKDEPASSSKSSNTSQSQKKGQQS) is disordered. The span at 760 to 777 (SSSKSSNTSQSQKKGQQS) shows a compositional bias: low complexity.

The protein belongs to the ARTD/PARP family. In terms of processing, auto-mono-ADP-ribosylated.

It carries out the reaction L-cysteinyl-[protein] + NAD(+) = S-(ADP-D-ribosyl)-L-cysteinyl-[protein] + nicotinamide + H(+). In terms of biological role, mono-ADP-ribosyltransferase that mediates mono-ADP-ribosylation of target proteins. The sequence is that of Protein mono-ADP-ribosyltransferase PARP8 from Homo sapiens (Human).